The sequence spans 128 residues: Sulfurtransferase TusD (128 aa).

The active-site Cysteine persulfide intermediate is the C78.

Belongs to the DsrE/TusD family. In terms of assembly, heterohexamer, formed by a dimer of trimers. The hexameric TusBCD complex contains 2 copies each of TusB, TusC and TusD. The TusBCD complex interacts with TusE.

It localises to the cytoplasm. Part of a sulfur-relay system required for 2-thiolation of 5-methylaminomethyl-2-thiouridine (mnm(5)s(2)U) at tRNA wobble positions. Accepts sulfur from TusA and transfers it in turn to TusE. The polypeptide is Sulfurtransferase TusD (Escherichia fergusonii (strain ATCC 35469 / DSM 13698 / CCUG 18766 / IAM 14443 / JCM 21226 / LMG 7866 / NBRC 102419 / NCTC 12128 / CDC 0568-73)).